A 431-amino-acid polypeptide reads, in one-letter code: Serine--tRNA ligase (431 aa).

235 to 237 (TSE) contributes to the L-serine binding site. 266 to 268 (RSE) serves as a coordination point for ATP. L-serine is bound at residue glutamate 289. 353–356 (EISS) contacts ATP. Residue serine 388 participates in L-serine binding.

Belongs to the class-II aminoacyl-tRNA synthetase family. Type-1 seryl-tRNA synthetase subfamily. As to quaternary structure, homodimer. The tRNA molecule binds across the dimer.

The protein resides in the cytoplasm. The catalysed reaction is tRNA(Ser) + L-serine + ATP = L-seryl-tRNA(Ser) + AMP + diphosphate + H(+). It carries out the reaction tRNA(Sec) + L-serine + ATP = L-seryl-tRNA(Sec) + AMP + diphosphate + H(+). It functions in the pathway aminoacyl-tRNA biosynthesis; selenocysteinyl-tRNA(Sec) biosynthesis; L-seryl-tRNA(Sec) from L-serine and tRNA(Sec): step 1/1. Catalyzes the attachment of serine to tRNA(Ser). Is also able to aminoacylate tRNA(Sec) with serine, to form the misacylated tRNA L-seryl-tRNA(Sec), which will be further converted into selenocysteinyl-tRNA(Sec). In Paraburkholderia phytofirmans (strain DSM 17436 / LMG 22146 / PsJN) (Burkholderia phytofirmans), this protein is Serine--tRNA ligase.